A 432-amino-acid chain; its full sequence is Lipid-A-disaccharide synthase (432 aa).

The segment covering 1–11 (MTGIGNQTSGI) has biased composition (polar residues). A disordered region spans residues 1–35 (MTGIGNQTSGIETGVHDRAPADGEPTALPISHSPL).

The protein belongs to the LpxB family.

The catalysed reaction is a lipid X + a UDP-2-N,3-O-bis[(3R)-3-hydroxyacyl]-alpha-D-glucosamine = a lipid A disaccharide + UDP + H(+). The protein operates within bacterial outer membrane biogenesis; LPS lipid A biosynthesis. Condensation of UDP-2,3-diacylglucosamine and 2,3-diacylglucosamine-1-phosphate to form lipid A disaccharide, a precursor of lipid A, a phosphorylated glycolipid that anchors the lipopolysaccharide to the outer membrane of the cell. This is Lipid-A-disaccharide synthase from Xanthomonas oryzae pv. oryzae (strain MAFF 311018).